A 345-amino-acid polypeptide reads, in one-letter code: Dihydroorotate dehydrogenase (quinone) (345 aa).

FMN-binding positions include 65 to 69 (AGLDK) and Thr89. Residue Lys69 participates in substrate binding. Substrate is bound at residue 114 to 118 (NRMGF). Asn142 and Asn175 together coordinate FMN. Asn175 is a substrate binding site. Ser178 serves as the catalytic Nucleophile. Asn180 is a substrate binding site. Residues Lys220 and Thr248 each coordinate FMN. A substrate-binding site is contributed by 249–250 (NT). Residues Gly271, Gly300, and 321 to 322 (YT) contribute to the FMN site.

It belongs to the dihydroorotate dehydrogenase family. Type 2 subfamily. In terms of assembly, monomer. The cofactor is FMN.

The protein localises to the cell membrane. The catalysed reaction is (S)-dihydroorotate + a quinone = orotate + a quinol. It participates in pyrimidine metabolism; UMP biosynthesis via de novo pathway; orotate from (S)-dihydroorotate (quinone route): step 1/1. Functionally, catalyzes the conversion of dihydroorotate to orotate with quinone as electron acceptor. In Burkholderia mallei (strain NCTC 10247), this protein is Dihydroorotate dehydrogenase (quinone).